We begin with the raw amino-acid sequence, 611 residues long: Endo-1,4-beta-xylanase A (611 aa).

The signal sequence occupies residues 1–26 (MRTAMAKSLGAAAFLGAALFAHTLAA). The CBM2 domain occupies 27–128 (QTATCSYNIT…SVGGSICSGS (102 aa)). Cystine bridges form between C31/C125, C184/C215, and C194/C209. The CBM10 domain maps to 183-212 (QCNWYGTLYPLCVTTTNGWGWEDQRSCIAR). The GH10 domain occupies 281–607 (SGGNADIFTS…KPAYQGVVEA (327 aa)). E391 serves as the catalytic Proton donor. The active-site Nucleophile is the E510.

The protein belongs to the glycosyl hydrolase 10 (cellulase F) family.

The enzyme catalyses Endohydrolysis of (1-&gt;4)-beta-D-xylosidic linkages in xylans.. It functions in the pathway glycan degradation; xylan degradation. This chain is Endo-1,4-beta-xylanase A (xynA), found in Cellvibrio japonicus (strain Ueda107) (Pseudomonas fluorescens subsp. cellulosa).